The sequence spans 368 residues: Homoserine dehydrogenase (368 aa).

NAD(+) contacts are provided by V12, G14, and V15. V15 contacts NADP(+). NADPH is bound by residues V15, K59, T95, S96, and K119. NAD(+) is bound at residue T95. T95 contacts NADP(+). K119 is an NADP(+) binding site. Na(+) is bound by residues E146, V149, A151, and L153. Residues G209 and E212 each contribute to the NADP(+) site. E212 and D223 together coordinate L-homoserine. K227 acts as the Proton donor in catalysis. G349 provides a ligand contact to NAD(+). NADP(+) is bound at residue G349. G349 is an NADPH binding site.

It belongs to the homoserine dehydrogenase family. A metal cation serves as cofactor.

The catalysed reaction is L-homoserine + NADP(+) = L-aspartate 4-semialdehyde + NADPH + H(+). It catalyses the reaction L-homoserine + NAD(+) = L-aspartate 4-semialdehyde + NADH + H(+). Its pathway is amino-acid biosynthesis; L-methionine biosynthesis via de novo pathway; L-homoserine from L-aspartate: step 3/3. The protein operates within amino-acid biosynthesis; L-threonine biosynthesis; L-threonine from L-aspartate: step 3/5. Its function is as follows. Catalyzes the conversion of L-aspartate-beta-semialdehyde (L-Asa) to L-homoserine (L-Hse), the third step in the biosynthesis of amino acids that derive from aspartate (the aspartate family of amino acids), including methioinine and threonine, the latter of which is a precursor to isoleucine; production of homoserine leads to a branch-point in the pathway as it can either be O-phosphorylated for processing to threonine, or O-acylated for processing to methionine. The chain is Homoserine dehydrogenase from Emericella nidulans (strain FGSC A4 / ATCC 38163 / CBS 112.46 / NRRL 194 / M139) (Aspergillus nidulans).